Here is a 163-residue protein sequence, read N- to C-terminus: NADH-quinone oxidoreductase subunit I (163 aa).

4Fe-4S ferredoxin-type domains lie at 53–83 (LRRYPNGEERCIACKLCEAVCPALAITIEAG) and 94–123 (TLYEIDMFKCIYCGFCEESCPVDSIVETRE). [4Fe-4S] cluster is bound by residues Cys-63, Cys-66, Cys-69, Cys-73, Cys-103, Cys-106, Cys-109, and Cys-113.

Belongs to the complex I 23 kDa subunit family. NDH-1 is composed of 14 different subunits. Subunits NuoA, H, J, K, L, M, N constitute the membrane sector of the complex. The cofactor is [4Fe-4S] cluster.

The protein localises to the cell inner membrane. The catalysed reaction is a quinone + NADH + 5 H(+)(in) = a quinol + NAD(+) + 4 H(+)(out). Functionally, NDH-1 shuttles electrons from NADH, via FMN and iron-sulfur (Fe-S) centers, to quinones in the respiratory chain. The immediate electron acceptor for the enzyme in this species is believed to be ubiquinone. Couples the redox reaction to proton translocation (for every two electrons transferred, four hydrogen ions are translocated across the cytoplasmic membrane), and thus conserves the redox energy in a proton gradient. This is NADH-quinone oxidoreductase subunit I from Alkalilimnicola ehrlichii (strain ATCC BAA-1101 / DSM 17681 / MLHE-1).